The following is a 169-amino-acid chain: Glycine-rich RNA-binding protein GRP2A (169 aa).

In terms of domain architecture, RRM spans 8-86 (YRCFVGGLAW…RSITVNEAQS (79 aa)). 2 disordered regions span residues 69–100 (MNGQDLDGRSITVNEAQSRGSGAGGGGRGGGG) and 125–169 (YSGG…GGGW). Residues 89–100 (SGAGGGGRGGGG) are compositionally biased toward gly residues.

Predominantly expressed in meristematic and growing tissue.

It localises to the nucleus. Its function is as follows. May play a general role in circadian phenomena associated with meristematic tissue. This Sinapis alba (White mustard) protein is Glycine-rich RNA-binding protein GRP2A.